Consider the following 32-residue polypeptide: Cytochrome b6-f complex subunit 7 (32 aa).

A helical membrane pass occupies residues 9-27 (AVLSSVLVLVGLAIGFLLL).

This sequence belongs to the PetM family. The 4 large subunits of the cytochrome b6-f complex are cytochrome b6, subunit IV (17 kDa polypeptide, PetD), cytochrome f and the Rieske protein, while the 4 small subunits are PetG, PetL, PetM and PetN. The complex functions as a dimer.

The protein localises to the plastid. The protein resides in the chloroplast thylakoid membrane. Functionally, component of the cytochrome b6-f complex, which mediates electron transfer between photosystem II (PSII) and photosystem I (PSI), cyclic electron flow around PSI, and state transitions. In Pyropia yezoensis (Susabi-nori), this protein is Cytochrome b6-f complex subunit 7.